The sequence spans 247 residues: 2,3-bisphosphoglycerate-dependent phosphoglycerate mutase (247 aa).

Substrate-binding positions include 8-15 (RHGESQWN), 21-22 (TG), Arg60, 87-90 (ERHY), Lys98, 114-115 (RR), and 183-184 (GN). Catalysis depends on His9, which acts as the Tele-phosphohistidine intermediate. The active-site Proton donor/acceptor is the Glu87.

Belongs to the phosphoglycerate mutase family. BPG-dependent PGAM subfamily.

The enzyme catalyses (2R)-2-phosphoglycerate = (2R)-3-phosphoglycerate. The protein operates within carbohydrate degradation; glycolysis; pyruvate from D-glyceraldehyde 3-phosphate: step 3/5. In terms of biological role, catalyzes the interconversion of 2-phosphoglycerate and 3-phosphoglycerate. The sequence is that of 2,3-bisphosphoglycerate-dependent phosphoglycerate mutase from Chlorobaculum tepidum (strain ATCC 49652 / DSM 12025 / NBRC 103806 / TLS) (Chlorobium tepidum).